We begin with the raw amino-acid sequence, 552 residues long: Metal transporter Nramp6.1 (552 aa).

An N-linked (GlcNAc...) asparagine glycan is attached at N11. Transmembrane regions (helical) follow at residues 55-75 (FLSY…PGNL), 88-108 (ELLW…SLAA), 133-155 (CLWL…GTAF), 159-181 (ILFN…LLLG), 189-209 (KLEL…FGEM), 238-258 (IALL…ALVL), and 275-295 (YFLI…LAVI). N-linked (GlcNAc...) asparagine glycosylation occurs at N306. 5 consecutive transmembrane segments (helical) span residues 338 to 358 (IYAI…TYAG), 377 to 397 (LVTR…GGSS), 402 to 422 (LIII…IPLL), 438 to 458 (IYII…NIYY), and 478 to 498 (VFIG…VIYL). The interval 511–552 (PNKNDPQQQTNMENGLAKSTEGPEMVDRAPYREDLADIPLPE) is disordered. Positions 514 to 523 (NDPQQQTNME) are enriched in polar residues. Basic and acidic residues predominate over residues 535-545 (MVDRAPYREDL).

This sequence belongs to the NRAMP (TC 2.A.55) family.

The protein localises to the membrane. In terms of biological role, probable divalent metal transporter. This chain is Metal transporter Nramp6.1, found in Populus trichocarpa (Western balsam poplar).